The sequence spans 150 residues: Transcription antitermination protein NusB (150 aa).

It belongs to the NusB family.

Involved in transcription antitermination. Required for transcription of ribosomal RNA (rRNA) genes. Binds specifically to the boxA antiterminator sequence of the ribosomal RNA (rrn) operons. The polypeptide is Transcription antitermination protein NusB (Streptococcus pyogenes serotype M6 (strain ATCC BAA-946 / MGAS10394)).